Consider the following 344-residue polypeptide: Protein POLAR LOCALIZATION DURING ASYMMETRIC DIVISION AND REDISTRIBUTION (344 aa).

Threonine 19 is modified (phosphothreonine; by ASK7). At serine 79 the chain carries Phosphoserine; by ASK7. Phosphothreonine; by ASK7 occurs at positions 84 and 86. A phosphoserine; by ASK7 mark is found at serine 91 and serine 94. A phosphothreonine; by ASK7 mark is found at threonine 193, threonine 217, and threonine 233. At serine 235 the chain carries Phosphoserine; by ASK7. Positions 262-297 (LETRQQEELVKLETALNRVERRLQEKETEVSWWKDA) form a coiled coil. Phosphoserine; by ASK7 is present on residues serine 308, serine 309, serine 320, serine 321, and serine 336.

Component of a complex made of POLAR, BASL, ASK7/BIN2 and ASK3/SK12. Interacts with BASL, ASK7/BIN2 and ASK3/SK12. Post-translationally, phosphorylation by ASK7/BIN2 is increases turnover. In terms of tissue distribution, expressed in stomatal lineage cells with asymmetric division potential.

It localises to the cytoplasm. Its subcellular location is the cell cortex. In terms of biological role, regulates asymmetric cell division (ACD), especially in stomatal-lineage cells. Acts as a stomatal lineage scaffold which regulates subcellular localization and transient polarization of kinases (e.g. ASK7/BIN2 and ASK3/SK12) involved in ACD in a BASL-dependent manner. Promotes the differentiation of both pavement cells and stomata. The protein is Protein POLAR LOCALIZATION DURING ASYMMETRIC DIVISION AND REDISTRIBUTION of Arabidopsis thaliana (Mouse-ear cress).